A 284-amino-acid polypeptide reads, in one-letter code: Serine/arginine-rich splicing factor RS2Z32 (284 aa).

In terms of domain architecture, RRM spans 11-81 (TRLYVGRLSS…SRITVEASRG (71 aa)). The disordered stretch occupies residues 74-97 (ITVEASRGAPRGSRDNGSRGPPPG). 2 consecutive CCHC-type zinc fingers follow at residues 99 to 116 (GRCF…DCTA) and 121 to 138 (NKCY…NCKN). Residues 132 to 284 (IERNCKNSPS…RPSPKGSESP (153 aa)) form a disordered region. Over residues 159–180 (RSPRRRRSPSRSRSYSRGRSYS) the composition is skewed to basic residues. Residues Ser166, Ser168, and Ser184 each carry the phosphoserine modification. The span at 186 to 203 (VRREKSVEDRSRSPKAME) shows a compositional bias: basic and acidic residues. A phosphoserine mark is found at Ser205, Ser207, Ser214, Ser216, Ser225, Ser235, Ser255, Ser265, Ser277, and Ser281. The span at 209–236 (KGRDQSLSPDRKVIDASPKRGSDYDGSP) shows a compositional bias: basic and acidic residues.

The protein belongs to the splicing factor SR family. RS2Z subfamily. Component of the spliceosome. Post-translationally, extensively phosphorylated on serine residues in the RS domain.

The protein resides in the nucleus. Probably involved in intron recognition and spliceosome assembly. The chain is Serine/arginine-rich splicing factor RS2Z32 (RS2Z32) from Arabidopsis thaliana (Mouse-ear cress).